The primary structure comprises 180 residues: Oligoribonuclease (180 aa).

One can recognise an Exonuclease domain in the interval 7-170 (LIWIDLEMTG…DDIRESIAEL (164 aa)). Tyr128 is an active-site residue.

The protein belongs to the oligoribonuclease family.

Its subcellular location is the cytoplasm. Its function is as follows. 3'-to-5' exoribonuclease specific for small oligoribonucleotides. This is Oligoribonuclease from Pseudomonas fluorescens (strain ATCC BAA-477 / NRRL B-23932 / Pf-5).